Consider the following 197-residue polypeptide: Caspase recruitment domain-containing protein 16 (197 aa).

In terms of domain architecture, CARD spans 1-91 (MADKVLKEKR…YLAETLGLSA (91 aa)).

In terms of assembly, homooligomer. Interacts with CASP1, CASP4, CARD8 and RIPK2. As to expression, widely expressed. Expressed at higher level in placenta, spleen, lymph node and bone marrow. Weakly or not expressed in thymus.

Caspase inhibitor. Acts as a regulator of procaspase-1/CASP1 activation implicated in the regulation of the proteolytic maturation of pro-interleukin-1 beta (IL1B) and its release during inflammation. Inhibits the release of IL1B in response to LPS in monocytes. Also induces NF-kappa-B activation during the pro-inflammatory cytokine response. Also able to inhibit CASP1-mediated neuronal cell death, TNF-alpha, hypoxia-, UV-, and staurosporine-mediated cell death but not ER stress-mediated cell death. Acts by preventing activation of caspases CASP1 and CASP4, possibly by preventing the interaction between CASP1 and RIPK2. The chain is Caspase recruitment domain-containing protein 16 (CARD16) from Homo sapiens (Human).